The primary structure comprises 247 residues: MKAVILIPARLDSSRLEKKMLADLQGEPLIVRTWRQALKSRLADRVVVATDNDEIASVLQAYGAEVVMTSPHARCGTERIAEAAKSIEGDIYVNLQGDEPLISPENIDLALEPFFTETPPDCSTLVFPLLPEDFRQLEDINTVKVVMDNAGYALYFSRSPIPYQRQISTSTECYRHIGLYAFRADVLHAFASLAPSMLELAESLEQLRLLENGYRIRCVKTTRDAPGVNTYEDLELVRQLLRNAPVQ.

This sequence belongs to the KdsB family.

Its subcellular location is the cytoplasm. It catalyses the reaction 3-deoxy-alpha-D-manno-oct-2-ulosonate + CTP = CMP-3-deoxy-beta-D-manno-octulosonate + diphosphate. The protein operates within nucleotide-sugar biosynthesis; CMP-3-deoxy-D-manno-octulosonate biosynthesis; CMP-3-deoxy-D-manno-octulosonate from 3-deoxy-D-manno-octulosonate and CTP: step 1/1. It functions in the pathway bacterial outer membrane biogenesis; lipopolysaccharide biosynthesis. Its function is as follows. Activates KDO (a required 8-carbon sugar) for incorporation into bacterial lipopolysaccharide in Gram-negative bacteria. This is 3-deoxy-manno-octulosonate cytidylyltransferase from Chlorobium phaeobacteroides (strain DSM 266 / SMG 266 / 2430).